We begin with the raw amino-acid sequence, 209 residues long: Thymidylate kinase (209 aa).

10–17 lines the ATP pocket; sequence GLDGAGKS.

It belongs to the thymidylate kinase family.

The catalysed reaction is dTMP + ATP = dTDP + ADP. In terms of biological role, phosphorylation of dTMP to form dTDP in both de novo and salvage pathways of dTTP synthesis. This is Thymidylate kinase from Francisella tularensis subsp. holarctica (strain FTNF002-00 / FTA).